A 190-amino-acid polypeptide reads, in one-letter code: Ohanin (190 aa).

The N-terminal stretch at M1–A20 is a signal peptide. The region spanning S21–L127 is the B30.2/SPRY domain. Positions R128–L190 are excised as a propeptide.

As to expression, expressed by the venom gland.

It localises to the secreted. Neurotoxin that produces dose-dependent hypolocomotion and hyperalgesia in mice. May directly act on the central nervous system, as it is 6500-fold more potent when administered intracerebroventricularly than intraperitoneal. The polypeptide is Ohanin (Ophiophagus hannah (King cobra)).